Consider the following 1074-residue polypeptide: Transmembrane protein 132E (1074 aa).

An N-terminal signal peptide occupies residues 1–23 (MAPGMSGRRGAALLCLSVLLAHA). The Extracellular segment spans residues 26–894 (RSHPASPSPP…LTDLEIGMYA (869 aa)). N-linked (GlcNAc...) asparagine glycosylation is found at Asn-70 and Asn-91. Disordered stretches follow at residues 205 to 224 (PAAP…PEAA) and 243 to 266 (GGCG…ESPT). The span at 247–262 (SARRGPGPGPGAAARA) shows a compositional bias: low complexity. N-linked (GlcNAc...) asparagine glycosylation is found at Asn-320 and Asn-401. Disordered stretches follow at residues 564-587 (RRSA…ANRG) and 816-867 (GRDE…PVPP). Over residues 843–854 (GAGPPGTAIPAG) the composition is skewed to low complexity. The helical transmembrane segment at 895–915 (LLGVFCLAILVFLINCIVFVL) threads the bilayer. At 916–1074 (RYRHKRIPPE…NYMRRIKDIA (159 aa)) the chain is on the cytoplasmic side. Residues 962 to 1064 (VPACCHGDHH…TRPTPPPDLH (103 aa)) are disordered. Low complexity-rich tracts occupy residues 973–985 (SGSS…SQVH) and 1016–1026 (FTTFTTLPTEE). The segment covering 1035 to 1044 (GEEEDEEEDL) has biased composition (acidic residues).

The protein belongs to the TMEM132 family. As to expression, widely expressed, with highest levels in the cochlea. In the cochlea, detected in spiral ganglion, the organ of Corti and stria vascularis. In the organ of Corti, prominently expressed in the outer and inner hair cells, especially at the apical and basal region of the outer hair cell body (at protein level).

Its subcellular location is the membrane. In terms of biological role, required for normal inner ear hair cell function and hearing. This chain is Transmembrane protein 132E (Tmem132e), found in Mus musculus (Mouse).